The sequence spans 190 residues: Protein GrpE (190 aa).

A compositionally biased stretch (polar residues) spans 1 to 18 (MTETPNTSSEEIQTSEPS). The segment at 1–21 (MTETPNTSSEEIQTSEPSPDN) is disordered.

Belongs to the GrpE family. Homodimer.

The protein resides in the cytoplasm. In terms of biological role, participates actively in the response to hyperosmotic and heat shock by preventing the aggregation of stress-denatured proteins, in association with DnaK and GrpE. It is the nucleotide exchange factor for DnaK and may function as a thermosensor. Unfolded proteins bind initially to DnaJ; upon interaction with the DnaJ-bound protein, DnaK hydrolyzes its bound ATP, resulting in the formation of a stable complex. GrpE releases ADP from DnaK; ATP binding to DnaK triggers the release of the substrate protein, thus completing the reaction cycle. Several rounds of ATP-dependent interactions between DnaJ, DnaK and GrpE are required for fully efficient folding. The protein is Protein GrpE of Chlamydia trachomatis serovar A (strain ATCC VR-571B / DSM 19440 / HAR-13).